A 388-amino-acid polypeptide reads, in one-letter code: Cell adhesion molecule 4 (388 aa).

The N-terminal stretch at Met1 to Gly20 is a signal peptide. The region spanning Pro21–Thr119 is the Ig-like V-type domain. The Extracellular portion of the chain corresponds to Gln25–Ala324. 2 N-linked (GlcNAc...) asparagine glycosylation sites follow: Asn31 and Asn67. 3 cysteine pairs are disulfide-bonded: Cys44–Cys104, Cys145–Cys199, and Cys245–Cys291. Ig-like C2-type domains are found at residues Pro124–Asp219 and Pro224–Val307. A glycan (N-linked (GlcNAc...) asparagine) is linked at Asn286. The chain crosses the membrane as a helical span at residues Ile325 to Val345. At Trp346–Ile388 the chain is on the cytoplasmic side. Position 361 is a phosphoserine (Ser361).

It belongs to the nectin family. As to quaternary structure, monomer and homodimer. N-glycosylated.

It localises to the membrane. In terms of biological role, involved in the cell-cell adhesion. Has calcium- and magnesium-independent cell-cell adhesion activity. May have tumor-suppressor activity. The polypeptide is Cell adhesion molecule 4 (Cadm4) (Rattus norvegicus (Rat)).